A 227-amino-acid polypeptide reads, in one-letter code: Phosphoribosylformylglycinamidine synthase subunit PurQ (227 aa).

The Glutamine amidotransferase type-1 domain maps to 3-227; sequence FAVIVFPGSN…NWRESHVTAS (225 aa). Cys-86 functions as the Nucleophile in the catalytic mechanism. Residues His-194 and Glu-196 contribute to the active site.

As to quaternary structure, part of the FGAM synthase complex composed of 1 PurL, 1 PurQ and 2 PurS subunits.

Its subcellular location is the cytoplasm. The catalysed reaction is N(2)-formyl-N(1)-(5-phospho-beta-D-ribosyl)glycinamide + L-glutamine + ATP + H2O = 2-formamido-N(1)-(5-O-phospho-beta-D-ribosyl)acetamidine + L-glutamate + ADP + phosphate + H(+). The enzyme catalyses L-glutamine + H2O = L-glutamate + NH4(+). It participates in purine metabolism; IMP biosynthesis via de novo pathway; 5-amino-1-(5-phospho-D-ribosyl)imidazole from N(2)-formyl-N(1)-(5-phospho-D-ribosyl)glycinamide: step 1/2. Part of the phosphoribosylformylglycinamidine synthase complex involved in the purines biosynthetic pathway. Catalyzes the ATP-dependent conversion of formylglycinamide ribonucleotide (FGAR) and glutamine to yield formylglycinamidine ribonucleotide (FGAM) and glutamate. The FGAM synthase complex is composed of three subunits. PurQ produces an ammonia molecule by converting glutamine to glutamate. PurL transfers the ammonia molecule to FGAR to form FGAM in an ATP-dependent manner. PurS interacts with PurQ and PurL and is thought to assist in the transfer of the ammonia molecule from PurQ to PurL. This is Phosphoribosylformylglycinamidine synthase subunit PurQ from Shouchella clausii (strain KSM-K16) (Alkalihalobacillus clausii).